We begin with the raw amino-acid sequence, 335 residues long: Large ribosomal subunit protein uL10 (335 aa).

Residues 306–335 are disordered; that stretch reads VEETVEEEEEEEEEEDAEEEAAAGLGALFG. A compositionally biased stretch (acidic residues) spans 308 to 326; the sequence is ETVEEEEEEEEEEDAEEEA.

Belongs to the universal ribosomal protein uL10 family. As to quaternary structure, part of the 50S ribosomal subunit. Forms part of the ribosomal stalk which helps the ribosome interact with GTP-bound translation factors. Forms a heptameric L10(L12)2(L12)2(L12)2 complex, where L10 forms an elongated spine to which the L12 dimers bind in a sequential fashion.

Its function is as follows. Forms part of the ribosomal stalk, playing a central role in the interaction of the ribosome with GTP-bound translation factors. The sequence is that of Large ribosomal subunit protein uL10 from Methanobrevibacter smithii (strain ATCC 35061 / DSM 861 / OCM 144 / PS).